The chain runs to 200 residues: Peptidyl-tRNA hydrolase (200 aa).

Tyr23 contacts tRNA. His28 serves as the catalytic Proton acceptor. TRNA contacts are provided by Phe79, Asn81, and Asn127.

This sequence belongs to the PTH family. In terms of assembly, monomer.

It localises to the cytoplasm. The catalysed reaction is an N-acyl-L-alpha-aminoacyl-tRNA + H2O = an N-acyl-L-amino acid + a tRNA + H(+). Its function is as follows. Hydrolyzes ribosome-free peptidyl-tRNAs (with 1 or more amino acids incorporated), which drop off the ribosome during protein synthesis, or as a result of ribosome stalling. In terms of biological role, catalyzes the release of premature peptidyl moieties from peptidyl-tRNA molecules trapped in stalled 50S ribosomal subunits, and thus maintains levels of free tRNAs and 50S ribosomes. This is Peptidyl-tRNA hydrolase from Streptomyces coelicolor (strain ATCC BAA-471 / A3(2) / M145).